The primary structure comprises 464 residues: UDP-N-acetylmuramoylalanine--D-glutamate ligase (464 aa).

An ATP-binding site is contributed by 127–133; sequence GSNGKST.

The protein belongs to the MurCDEF family.

It is found in the cytoplasm. The enzyme catalyses UDP-N-acetyl-alpha-D-muramoyl-L-alanine + D-glutamate + ATP = UDP-N-acetyl-alpha-D-muramoyl-L-alanyl-D-glutamate + ADP + phosphate + H(+). It participates in cell wall biogenesis; peptidoglycan biosynthesis. Functionally, cell wall formation. Catalyzes the addition of glutamate to the nucleotide precursor UDP-N-acetylmuramoyl-L-alanine (UMA). In Roseobacter denitrificans (strain ATCC 33942 / OCh 114) (Erythrobacter sp. (strain OCh 114)), this protein is UDP-N-acetylmuramoylalanine--D-glutamate ligase.